We begin with the raw amino-acid sequence, 124 residues long: Ribonuclease pancreatic (124 aa).

Residues 1–24 (KESSAMKFQRQHMDSSGSPSTNAN) are disordered. Substrate contacts are provided by lysine 7 and arginine 10. The active-site Proton acceptor is the histidine 12. Over residues 14 to 24 (DSSGSPSTNAN) the composition is skewed to polar residues. Cystine bridges form between cysteine 26-cysteine 84, cysteine 40-cysteine 95, cysteine 58-cysteine 110, and cysteine 65-cysteine 72. Asparagine 34 is a glycosylation site (N-linked (GlcNAc...) asparagine). Substrate-binding positions include 41–45 (KPVNT), lysine 66, and arginine 85. Histidine 119 functions as the Proton donor in the catalytic mechanism.

The protein belongs to the pancreatic ribonuclease family. In terms of assembly, monomer. Interacts with and forms tight 1:1 complexes with RNH1. Dimerization of two such complexes may occur. Interaction with RNH1 inhibits this protein. In terms of tissue distribution, pancreas.

It is found in the secreted. The catalysed reaction is an [RNA] containing cytidine + H2O = an [RNA]-3'-cytidine-3'-phosphate + a 5'-hydroxy-ribonucleotide-3'-[RNA].. It catalyses the reaction an [RNA] containing uridine + H2O = an [RNA]-3'-uridine-3'-phosphate + a 5'-hydroxy-ribonucleotide-3'-[RNA].. Endonuclease that catalyzes the cleavage of RNA on the 3' side of pyrimidine nucleotides. Acts on single-stranded and double-stranded RNA. The polypeptide is Ribonuclease pancreatic (RNASE1) (Chinchilla chinchilla (Short-tailed chinchilla)).